Reading from the N-terminus, the 457-residue chain is Putative metabolite transport protein YwtG (457 aa).

12 consecutive transmembrane segments (helical) span residues 7–27 (IWLY…TGVI), 38–58 (LGLN…GAIL), 75–95 (AIMA…LAPN), 97–117 (GVMV…TTIV), 136–156 (LNQL…YIFA), 163–183 (WMLG…LFMP), 240–260 (ALIA…NTII), 276–296 (ASIL…LVAI), 309–329 (LFGN…NLFF), 340–360 (VICL…VVWV), 377–397 (VSTL…PILM), and 400–420 (IGIS…FLFV). The segment at 438 to 457 (DLRDKNGQGGAAGKQQTVGT) is disordered.

This sequence belongs to the major facilitator superfamily. Sugar transporter (TC 2.A.1.1) family.

It localises to the cell membrane. In Bacillus subtilis (strain 168), this protein is Putative metabolite transport protein YwtG (ywtG).